The primary structure comprises 1510 residues: Chromosome partition protein MukB (1510 aa).

Residue 75–82 (GGNGAGKS) participates in ATP binding. The stretch at 346–706 (QHRLVDLSRE…LDEQISRLSQ (361 aa)) forms a coiled coil. Positions 707 to 824 (PDGSEDPRLN…EIPLFGCAAR (118 aa)) are flexible hinge. 2 coiled-coil regions span residues 825-1154 (EKRL…AAKV) and 1248-1304 (IDAI…LQNI).

The protein belongs to the SMC family. MukB subfamily. As to quaternary structure, homodimerization via its hinge domain. Binds to DNA via its C-terminal region. Interacts, and probably forms a ternary complex, with MukE and MukF via its C-terminal region. The complex formation is stimulated by calcium or magnesium. Interacts with tubulin-related protein FtsZ.

The protein localises to the cytoplasm. Its subcellular location is the nucleoid. In terms of biological role, plays a central role in chromosome condensation, segregation and cell cycle progression. Functions as a homodimer, which is essential for chromosome partition. Involved in negative DNA supercoiling in vivo, and by this means organize and compact chromosomes. May achieve or facilitate chromosome segregation by condensation DNA from both sides of a centrally located replisome during cell division. This Haemophilus influenzae (strain ATCC 51907 / DSM 11121 / KW20 / Rd) protein is Chromosome partition protein MukB.